Here is a 207-residue protein sequence, read N- to C-terminus: MNTKSPILILIAGASGSGKTTFANEIIARIPKNTTSVVICQDSYYISNSQLNKKERRLINYDHPSSFEWELMREQLSDIKKRKKIKVPIYDYKTEIRLDKTIDISDVDVIVLEGIYAIYDDVINQIADLKIFIETPKDECLIRRILRDVNERNRSFESVITQWRSTVSPMYDQFVEPSKKNANVSVLWNEHNRVALHLIHKWINNIH.

13–20 (GASGSGKT) lines the ATP pocket.

It belongs to the uridine kinase family.

The protein resides in the cytoplasm. It catalyses the reaction uridine + ATP = UMP + ADP + H(+). The catalysed reaction is cytidine + ATP = CMP + ADP + H(+). It functions in the pathway pyrimidine metabolism; CTP biosynthesis via salvage pathway; CTP from cytidine: step 1/3. It participates in pyrimidine metabolism; UMP biosynthesis via salvage pathway; UMP from uridine: step 1/1. This Ureaplasma parvum serovar 3 (strain ATCC 27815 / 27 / NCTC 11736) protein is Uridine kinase.